The sequence spans 59 residues: U-actitoxin-Aer2b (59 aa).

Contains 5 disulfide bonds.

It is found in the secreted. It localises to the nematocyst. The chain is U-actitoxin-Aer2b from Anemonia erythraea (Sea anemone).